We begin with the raw amino-acid sequence, 138 residues long: Transcriptional activator protein (138 aa).

Over residues 1 to 20 (MTGSKKTPSTSPSKKLSSPP) the composition is skewed to low complexity. The segment at 1 to 23 (MTGSKKTPSTSPSKKLSSPPEVK) is disordered. Positions 23-37 (KLRHRFAKRQIRRRR) match the Nuclear localization signal motif. A zinc finger spans residues 42–59 (CGCSIYIHINCVNNGFTH). Over residues 85-106 (NTASGDANVHTQPGISHSSQSK) the composition is skewed to polar residues. The disordered stretch occupies residues 85 to 123 (NTASGDANVHTQPGISHSSQSKPQHEDSVGSPQSLLQLP). Positions 113 to 123 (VGSPQSLLQLP) are enriched in low complexity. The tract at residues 124–138 (SLDDVDDDFWADLLK) is transactivation.

It belongs to the geminiviridae transcriptional activator protein family. In terms of assembly, monomer. Homodimer. Homooligomer. Self-interaction correlates with nuclear localization and efficient activation of transcription. Monomers suppress local silencing by interacting with and inactivating host adenosine kinase 2 (ADK2) in the cytoplasm. Interacts with and inhibits host SNF1 kinase. Binds to ssDNA. Phosphorylated.

It is found in the host nucleus. Its subcellular location is the host cytoplasm. Strong activator of the late viral genes promoters. Enhances the expression of the capsid protein and nuclear shuttle protein. Acts as a suppressor of RNA-mediated gene silencing, also known as post-transcriptional gene silencing (PTGS), a mechanism of plant viral defense that limits the accumulation of viral RNAs. Suppresses the host RNA silencing by inhibiting adenosine kinase 2 (ADK2), a kinase involved in a general methylation pathway. Also suppresses the host basal defense by interacting with and inhibiting SNF1 kinase, a key regulator of cell metabolism implicated in innate antiviral defense. Determines pathogenicity. The polypeptide is Transcriptional activator protein (Pepper huasteco yellow vein virus (PHYVV)).